The primary structure comprises 635 residues: tRNA uridine 5-carboxymethylaminomethyl modification enzyme MnmG (635 aa).

Residue 15–20 (GAGHAG) coordinates FAD. An NAD(+)-binding site is contributed by 276–290 (GPRYCPSIEDKIVRF).

This sequence belongs to the MnmG family. Homodimer. Heterotetramer of two MnmE and two MnmG subunits. The cofactor is FAD.

The protein localises to the cytoplasm. Its function is as follows. NAD-binding protein involved in the addition of a carboxymethylaminomethyl (cmnm) group at the wobble position (U34) of certain tRNAs, forming tRNA-cmnm(5)s(2)U34. In Streptococcus sanguinis (strain SK36), this protein is tRNA uridine 5-carboxymethylaminomethyl modification enzyme MnmG.